Reading from the N-terminus, the 149-residue chain is Calmodulin-2 (149 aa).

N-acetylalanine is present on A2. 4 consecutive EF-hand domains span residues 8-43 (EQIA…LGQN), 44-79 (PTEA…KMKD), 81-116 (DSEE…LGEK), and 117-149 (LTDE…MLAK). Ca(2+) contacts are provided by D21, D23, D25, C27, E32, D57, D59, N61, T63, E68, D94, D96, N98, Y100, and D105. K116 bears the N6,N6,N6-trimethyllysine mark. D130, D132, D134, Q136, and E141 together coordinate Ca(2+).

Belongs to the calmodulin family.

In terms of biological role, calmodulin mediates the control of a large number of enzymes, ion channels and other proteins by Ca(2+). Among the enzymes to be stimulated by the calmodulin-Ca(2+) complex are a number of protein kinases and phosphatases. The protein is Calmodulin-2 (CAM72) of Petunia hybrida (Petunia).